A 214-amino-acid chain; its full sequence is Phosphoenolpyruvate guanylyltransferase (214 aa).

3 residues coordinate phosphoenolpyruvate: Thr148, Gly163, and Ser166.

Belongs to the CofC family.

It catalyses the reaction phosphoenolpyruvate + GTP + H(+) = enolpyruvoyl-2-diphospho-5'-guanosine + diphosphate. Its pathway is cofactor biosynthesis; coenzyme F420 biosynthesis. Guanylyltransferase that catalyzes the activation of phosphoenolpyruvate (PEP) as enolpyruvoyl-2-diphospho-5'-guanosine, via the condensation of PEP with GTP. It is involved in the biosynthesis of coenzyme F420, a hydride carrier cofactor. The sequence is that of Phosphoenolpyruvate guanylyltransferase from Mycolicibacterium gilvum (strain PYR-GCK) (Mycobacterium gilvum (strain PYR-GCK)).